A 259-amino-acid chain; its full sequence is Global transcriptional regulator CodY (259 aa).

The tract at residues 1 to 155 is GAF domain; that stretch reads MELLAKTRKL…SSTVVGMEIL (155 aa). A DNA-binding region (H-T-H motif) is located at residues 203-222; it reads ASKIADRVGITRSVIVNALR. Serine 215 is modified (phosphoserine).

Belongs to the CodY family.

It is found in the cytoplasm. DNA-binding global transcriptional regulator which is involved in the adaptive response to starvation and acts by directly or indirectly controlling the expression of numerous genes in response to nutrient availability. During rapid exponential growth, CodY is highly active and represses genes whose products allow adaptation to nutrient depletion. This Bacillus cereus (strain ATCC 10987 / NRS 248) protein is Global transcriptional regulator CodY.